A 374-amino-acid polypeptide reads, in one-letter code: DNA replication and repair protein RecF (374 aa).

ATP is bound at residue 30–37 (GENAQGKT).

Belongs to the RecF family.

The protein localises to the cytoplasm. The RecF protein is involved in DNA metabolism; it is required for DNA replication and normal SOS inducibility. RecF binds preferentially to single-stranded, linear DNA. It also seems to bind ATP. The polypeptide is DNA replication and repair protein RecF (Pediococcus pentosaceus (strain ATCC 25745 / CCUG 21536 / LMG 10740 / 183-1w)).